Consider the following 359-residue polypeptide: Lipopolysaccharide 1,6-galactosyltransferase (359 aa).

UDP is bound by residues Gln244 and Glu276.

It belongs to the glycosyltransferase group 1 family. Glycosyltransferase 4 subfamily.

The enzyme catalyses alpha-D-Glc-(1-&gt;3)-[L-alpha-D-Hep-(1-&gt;7)]-4-O-PO3(2-)-L-alpha-D-Hep-(1-&gt;3)-4-O-PO3(2-)-L-alpha-D-Hep-(1-&gt;5)-[alpha-Kdo-(2-&gt;4)]-alpha-Kdo-(2-&gt;6)-lipid A + UDP-alpha-D-galactose = alpha-D-Gal-(1-&gt;6)-alpha-D-Glc-(1-&gt;3)-[L-alpha-D-Hep-(1-&gt;7)]-4-O-PO3(2-)-L-alpha-D-Hep-(1-&gt;3)-4-O-PO3(2-)-L-alpha-D-Hep-(1-&gt;5)-[alpha-Kdo-(2-&gt;4)]-alpha-Kdo-(2-&gt;6)-lipid A + UDP + H(+). Its pathway is bacterial outer membrane biogenesis; LPS core biosynthesis. Functionally, galactosyltransferase involved in the biosynthesis of the core oligosaccharide region of lipopolysaccharide (LPS). Catalyzes the addition of galactose from UDP-galactose to the first glucose residue of the LPS outer core. In Salmonella typhimurium (strain LT2 / SGSC1412 / ATCC 700720), this protein is Lipopolysaccharide 1,6-galactosyltransferase.